The primary structure comprises 319 residues: L-tryptophan isonitrile synthase AmbI1 (319 aa).

This sequence belongs to the isocyanide synthase family.

It catalyses the reaction D-ribulose 5-phosphate + L-tryptophan = (2S)-3-(1H-indol-3-yl)-2-isocyanopropanoate + hydroxyacetone + formaldehyde + phosphate + H2O + H(+). Involved in the biosynthesis of ambiguines, a family of hapalindole-type alkaloids. Responsible for the synthesis of the isonitrile group on tryptophan using ribulose 5-phosphate as the source of the carbon atom. The sequence is that of L-tryptophan isonitrile synthase AmbI1 from Fischerella ambigua (strain UTEX 1903).